The primary structure comprises 191 residues: MSQSPPERFILLDGIRGVAALFIVHRHAEQFFGRDPASSYLAVDLFFALSGFVLAHAYGKKLYEGTITPGFFLKARFARLYPLYVLALALMAAYFICLYVLGLPTPIDDLHRLIDPGELAFALVTGLLFLPAPFTLTLNGALFLVSPAWSLFNELVVNAVYARWGARATMKQTVLVLAVSAVVLMVAAAEF.

This sequence belongs to the acyltransferase 3 family.

The protein localises to the cell membrane. Its function is as follows. Seems to regulate the surface properties of the bacterium in the presence of plant cells or plant cell extracts. This chain is Protein 2 in picA locus, found in Rhizobium radiobacter (Agrobacterium tumefaciens).